We begin with the raw amino-acid sequence, 354 residues long: Myosin-binding protein H-like (354 aa).

Residues 1–47 (MEAATAPEVAAGSKLKVKEASPADAEPPQASPGQGAGSPTPQLLPPI) form a disordered region. Ser38 carries the post-translational modification Phosphoserine. Residues 45 to 139 (PPIEEHPKIW…GGLEATATID (95 aa)) enclose the Ig-like C2-type 1 domain. One can recognise a Fibronectin type-III domain in the interval 148 to 238 (PPQSIKLVDV…ETAPITTDLA (91 aa)). Residues 261–345 (PKFTQPLADC…VNPLGEASVD (85 aa)) enclose the Ig-like C2-type 2 domain. Cys282 and Cys333 are disulfide-bonded. Omega-N-methylarginine is present on Arg321.

Belongs to the immunoglobulin superfamily. MyBP family. Expressed in heart, with higher expression in the atria. As to expression, expressed in left atrium and ventricle, arteria mammaria interna and skeletal muscle. In terms of tissue distribution, expressed specifically en the left atrium.

The protein resides in the cytoplasm. Its subcellular location is the myofibril. It localises to the sarcomere. Functionally, myosin-binding protein which plays a role in cardiac function. Seems to regulate conduction in the atria and ventricular conduction systems. This is Myosin-binding protein H-like from Homo sapiens (Human).